The sequence spans 393 residues: S-adenosylmethionine synthase 1 (393 aa).

E9 is a Mg(2+) binding site. H15 provides a ligand contact to ATP. E43 contributes to the K(+) binding site. 2 residues coordinate L-methionine: E56 and Q99. Residues 167 to 169 (DGK), 235 to 238 (SGRF), D246, 252 to 253 (RK), A269, K273, and K277 each bind ATP. D246 is a binding site for L-methionine. K277 is a binding site for L-methionine.

Belongs to the AdoMet synthase family. In terms of assembly, homotetramer. The cofactor is Mn(2+). Requires Mg(2+) as cofactor. Co(2+) is required as a cofactor. It depends on K(+) as a cofactor.

The protein resides in the cytoplasm. The catalysed reaction is L-methionine + ATP + H2O = S-adenosyl-L-methionine + phosphate + diphosphate. The protein operates within amino-acid biosynthesis; S-adenosyl-L-methionine biosynthesis; S-adenosyl-L-methionine from L-methionine: step 1/1. In terms of biological role, catalyzes the formation of S-adenosylmethionine from methionine and ATP. The reaction comprises two steps that are both catalyzed by the same enzyme: formation of S-adenosylmethionine (AdoMet) and triphosphate, and subsequent hydrolysis of the triphosphate. This is S-adenosylmethionine synthase 1 (METK1) from Picea sitchensis (Sitka spruce).